The following is a 293-amino-acid chain: Bifunctional protein FolD (293 aa).

Residues 165-167, S190, and I231 contribute to the NADP(+) site; that span reads GRS.

It belongs to the tetrahydrofolate dehydrogenase/cyclohydrolase family. In terms of assembly, homodimer.

It carries out the reaction (6R)-5,10-methylene-5,6,7,8-tetrahydrofolate + NADP(+) = (6R)-5,10-methenyltetrahydrofolate + NADPH. The catalysed reaction is (6R)-5,10-methenyltetrahydrofolate + H2O = (6R)-10-formyltetrahydrofolate + H(+). The protein operates within one-carbon metabolism; tetrahydrofolate interconversion. Functionally, catalyzes the oxidation of 5,10-methylenetetrahydrofolate to 5,10-methenyltetrahydrofolate and then the hydrolysis of 5,10-methenyltetrahydrofolate to 10-formyltetrahydrofolate. The chain is Bifunctional protein FolD from Synechococcus sp. (strain WH7803).